Reading from the N-terminus, the 509-residue chain is DNA primase large subunit (509 aa).

The segment at 253 to 270 is interdomain linker; it reads LSHSYTGQDYSTQGNVGK. Positions 266–509 are interacts with PRIM1; that stretch reads GNVGKISLDQ…GLEDYFSEDS (244 aa). Residues cysteine 287, cysteine 367, cysteine 384, and cysteine 424 each contribute to the [4Fe-4S] cluster site. The tract at residues 300–442 is RNA:DNA duplex-binding; sequence HLRHGGRMQY…NVDDCGFSLN (143 aa). Residues 461-486 are disordered; the sequence is IKKEPIQPETPQPKPSVQKTKDASSA. A Phosphothreonine modification is found at threonine 470.

Belongs to the eukaryotic-type primase large subunit family. Heterodimer of a catalytic subunit PRIM1 and a regulatory subunit PRIM2, also known as the DNA primase complex. Interacts via (C-terminus) with PRIM1. Component of the alpha DNA polymerase complex (also known as the alpha DNA polymerase-primase complex) consisting of four subunits: the catalytic subunit POLA1, the regulatory subunit POLA2, and the primase complex subunits PRIM1 and PRIM2 respectively. Within the complex, POLA1 directly interacts with PRIM2. The cofactor is [4Fe-4S] cluster.

Regulatory subunit of the DNA primase complex and component of the DNA polymerase alpha complex (also known as the alpha DNA polymerase-primase complex) which play an essential role in the initiation of DNA synthesis. During the S phase of the cell cycle, the DNA polymerase alpha complex (composed of a catalytic subunit POLA1, an accessory subunit POLA2 and two primase subunits, the catalytic subunit PRIM1 and the regulatory subunit PRIM2) is recruited to DNA at the replicative forks via direct interactions with MCM10 and WDHD1. The primase subunit of the polymerase alpha complex initiates DNA synthesis by oligomerising short RNA primers on both leading and lagging strands. These primers are initially extended by the polymerase alpha catalytic subunit and subsequently transferred to polymerase delta and polymerase epsilon for processive synthesis on the lagging and leading strand, respectively. In the primase complex, both subunits are necessary for the initial di-nucleotide formation, but the extension of the primer depends only on the catalytic subunit. Binds RNA:DNA duplex and coordinates the catalytic activities of PRIM1 and POLA2 during primase-to-polymerase switch. This chain is DNA primase large subunit (PRIM2), found in Homo sapiens (Human).